The primary structure comprises 634 residues: 1-deoxy-D-xylulose-5-phosphate synthase (634 aa).

Thiamine diphosphate contacts are provided by residues His73 and 114–116; that span reads GHS. Asp145 is a binding site for Mg(2+). Thiamine diphosphate is bound by residues 146-147, Asn174, Tyr285, and Glu365; that span reads GA. Asn174 is a binding site for Mg(2+).

The protein belongs to the transketolase family. DXPS subfamily. As to quaternary structure, homodimer. Mg(2+) serves as cofactor. Thiamine diphosphate is required as a cofactor.

The enzyme catalyses D-glyceraldehyde 3-phosphate + pyruvate + H(+) = 1-deoxy-D-xylulose 5-phosphate + CO2. Its pathway is metabolic intermediate biosynthesis; 1-deoxy-D-xylulose 5-phosphate biosynthesis; 1-deoxy-D-xylulose 5-phosphate from D-glyceraldehyde 3-phosphate and pyruvate: step 1/1. Its function is as follows. Catalyzes the acyloin condensation reaction between C atoms 2 and 3 of pyruvate and glyceraldehyde 3-phosphate to yield 1-deoxy-D-xylulose-5-phosphate (DXP). This is 1-deoxy-D-xylulose-5-phosphate synthase from Desulforudis audaxviator (strain MP104C).